The primary structure comprises 217 residues: Octanoyltransferase (217 aa).

One can recognise a BPL/LPL catalytic domain in the interval 32–207 (NDSPDELWIV…TLSQLLGYQH (176 aa)). Residues 71–78 (RGGQVTYH), 138–140 (SLG), and 151–153 (GLA) each bind substrate. The Acyl-thioester intermediate role is filled by Cys-169.

Belongs to the LipB family.

The protein resides in the cytoplasm. It catalyses the reaction octanoyl-[ACP] + L-lysyl-[protein] = N(6)-octanoyl-L-lysyl-[protein] + holo-[ACP] + H(+). Its pathway is protein modification; protein lipoylation via endogenous pathway; protein N(6)-(lipoyl)lysine from octanoyl-[acyl-carrier-protein]: step 1/2. Functionally, catalyzes the transfer of endogenously produced octanoic acid from octanoyl-acyl-carrier-protein onto the lipoyl domains of lipoate-dependent enzymes. Lipoyl-ACP can also act as a substrate although octanoyl-ACP is likely to be the physiological substrate. This Shewanella oneidensis (strain ATCC 700550 / JCM 31522 / CIP 106686 / LMG 19005 / NCIMB 14063 / MR-1) protein is Octanoyltransferase.